Reading from the N-terminus, the 464-residue chain is L-cystine uptake protein TcyP (464 aa).

10 consecutive transmembrane segments (helical) span residues 3–23 (TLLV…LYYM), 34–54 (VFTA…IYEP), 73–93 (YVKL…ISAF), 107–127 (GLII…GIAA), 184–204 (PTST…FIGV), 225–245 (IVMR…LALM), 263–283 (FVLA…LLIA), 347–367 (AGIY…IDPL), 371–391 (FILT…GVGG), and 395–415 (FAAL…ALVI).

Belongs to the dicarboxylate/amino acid:cation symporter (DAACS) (TC 2.A.23) family.

It is found in the membrane. Mediates uptake of L-cystine, the oxidized form of L-cysteine. The polypeptide is L-cystine uptake protein TcyP (Bacillus cereus (strain ATCC 10987 / NRS 248)).